Here is a 423-residue protein sequence, read N- to C-terminus: MKAELIAVGTEILTGQIVNTNAQFLSEKMAELGIDVYFQTAVGDNEERLLSVITTASQRSDLVILCGGLGPTKDDLTKQTLAKYLRKDLVYDEQACQKLDDFFAKRKPSSRTPNNERQAQVIEGSISLPNKTGLAVGGFITVDGISYVVLPGPPSELKPMVNEELVPLLSKQYSTLYSKVLRFFGIGESQLVTVLSDFIENQTDPTIAPYAKTGEVTLRLSTKTENQALADKKLGQLEAQLLSRKTLEGQPLADVFYGYGEDNSLARETFELLVKYDKTITAAESLTAGLFQSTLASFPGASQVFNGGFVTYSMEEKAKMLGLPLEELKSYGVVSAYTAEGMAEQARLLTGADIGVSLTGVAGPDMLEEQPAGTVFIGLATQNKVESIKVLISGRSRLDVCYIATLHAFNMVRKTLLKLENLL.

The protein belongs to the CinA family.

The polypeptide is Putative competence-damage inducible protein (Streptococcus pyogenes serotype M49 (strain NZ131)).